Consider the following 231-residue polypeptide: DNA mismatch repair protein MutH (231 aa).

It belongs to the MutH family.

The protein resides in the cytoplasm. Its function is as follows. Sequence-specific endonuclease that cleaves unmethylated GATC sequences. It is involved in DNA mismatch repair. The sequence is that of DNA mismatch repair protein MutH from Pectobacterium atrosepticum (strain SCRI 1043 / ATCC BAA-672) (Erwinia carotovora subsp. atroseptica).